A 761-amino-acid chain; its full sequence is Probable ubiquitin carboxyl-terminal hydrolase creB (761 aa).

Residues 1 to 45 (MGSFLRSFRHNGGSTAPSVGAVPAKKEPQPPPMTPLEKRLLDMGP) are disordered. Basic and acidic residues predominate over residues 36-45 (LEKRLLDMGP). The USP domain maps to 55 to 468 (YGMENYGNTC…CAYVLFYQET (414 aa)). Catalysis depends on Cys-64, which acts as the Nucleophile. Disordered stretches follow at residues 113 to 146 (EAEAQAEKQKAANAQRPGMPPNPQQKPEDKDSPE) and 242 to 269 (PLMEKSLPAPETADSVDQSSSTGSKTPN). Positions 256–269 (SVDQSSSTGSKTPN) are enriched in polar residues. His-419 serves as the catalytic Proton acceptor. A disordered region spans residues 496–761 (LKQNGFPQSP…LRKKSFSILS (266 aa)). The segment covering 555-566 (PLSPVPPVPPIP) has biased composition (pro residues). Residues 577 to 640 (KNDALAKREE…ASKAEEDRRL (64 aa)) are a coiled coil. Basic and acidic residues predominate over residues 580–649 (ALAKREEKER…LSTENGKEKQ (70 aa)). Over residues 655 to 666 (RLKRGSKSLSHR) the composition is skewed to basic residues. A compositionally biased stretch (low complexity) spans 692-710 (SQSGPTSEQQQQQRQQSPP). The segment covering 712–722 (HDQPPNSPQPG) has biased composition (pro residues). The segment covering 725 to 743 (TIREDEQVNHKDSKHERTG) has biased composition (basic and acidic residues). Over residues 744–761 (HGKWRSFSLRKKSFSILS) the composition is skewed to basic residues.

Belongs to the peptidase C19 family. In terms of assembly, interacts with creA, creC and qutD.

The enzyme catalyses Thiol-dependent hydrolysis of ester, thioester, amide, peptide and isopeptide bonds formed by the C-terminal Gly of ubiquitin (a 76-residue protein attached to proteins as an intracellular targeting signal).. Functionally, ubiquitin thioesterase component of the regulatory network controlling carbon source utilization through ubiquitination and deubiquitination involving creA, creB, creC, creD and acrB. Deubiquitinates the creA catabolic repressor and the quinate permease qutD. Also plays a role in response to carbon starvation and the control of extracellular proteases activity. This Neosartorya fischeri (strain ATCC 1020 / DSM 3700 / CBS 544.65 / FGSC A1164 / JCM 1740 / NRRL 181 / WB 181) (Aspergillus fischerianus) protein is Probable ubiquitin carboxyl-terminal hydrolase creB (creB).